Consider the following 189-residue polypeptide: Glycerol-3-phosphate acyltransferase 1 (189 aa).

Transmembrane regions (helical) follow at residues 12–32, 61–81, 88–108, 124–144, and 164–184; these read MQFLYLVASYLFGNILTAYIV, GYFVATFLGDAIKGAIVVSIA, FTFVMLTLLAVIMGHIYPMLF, IAFDYLIALTLVAVFIIFYLI, and ILYSYSIVTTILSALIIVLIL.

Belongs to the PlsY family. Probably interacts with PlsX.

The protein resides in the cell membrane. The enzyme catalyses an acyl phosphate + sn-glycerol 3-phosphate = a 1-acyl-sn-glycero-3-phosphate + phosphate. The protein operates within lipid metabolism; phospholipid metabolism. Functionally, catalyzes the transfer of an acyl group from acyl-phosphate (acyl-PO(4)) to glycerol-3-phosphate (G3P) to form lysophosphatidic acid (LPA). This enzyme utilizes acyl-phosphate as fatty acyl donor, but not acyl-CoA or acyl-ACP. This is Glycerol-3-phosphate acyltransferase 1 from Bacillus anthracis.